The sequence spans 93 residues: Stage III sporulation protein D (93 aa).

Residues 4–75 (YIKERTIKIG…IRHLRGGEAT (72 aa)) form the HTH deoR-type domain. Positions 21-40 (KTVRVIAKEFGVSKSTVHKD) form a DNA-binding region, H-T-H motif.

In terms of biological role, this protein regulates the transcription of sigK, which encodes mother cell chamber RNA polymerase sigma-factor (sigma K). This chain is Stage III sporulation protein D (spoIIID), found in Bacillus subtilis (strain 168).